We begin with the raw amino-acid sequence, 187 residues long: Threonylcarbamoyl-AMP synthase (187 aa).

One can recognise a YrdC-like domain in the interval 4–187; it reads TPDLDAAVAT…DARTGQILRD (184 aa).

The protein belongs to the SUA5 family. TsaC subfamily.

It is found in the cytoplasm. The catalysed reaction is L-threonine + hydrogencarbonate + ATP = L-threonylcarbamoyladenylate + diphosphate + H2O. In terms of biological role, required for the formation of a threonylcarbamoyl group on adenosine at position 37 (t(6)A37) in tRNAs that read codons beginning with adenine. Catalyzes the conversion of L-threonine, HCO(3)(-)/CO(2) and ATP to give threonylcarbamoyl-AMP (TC-AMP) as the acyladenylate intermediate, with the release of diphosphate. The polypeptide is Threonylcarbamoyl-AMP synthase (Xanthomonas campestris pv. campestris (strain 8004)).